We begin with the raw amino-acid sequence, 331 residues long: Biotin synthase (331 aa).

In terms of domain architecture, Radical SAM core spans 52–277; the sequence is PDVEVEGIIS…RTMLRFAGGR (226 aa). [4Fe-4S] cluster-binding residues include C67, C71, and C74. [2Fe-2S] cluster-binding residues include C110, C143, C202, and R272.

Belongs to the radical SAM superfamily. Biotin synthase family. As to quaternary structure, homodimer. It depends on [4Fe-4S] cluster as a cofactor. [2Fe-2S] cluster serves as cofactor.

It catalyses the reaction (4R,5S)-dethiobiotin + (sulfur carrier)-SH + 2 reduced [2Fe-2S]-[ferredoxin] + 2 S-adenosyl-L-methionine = (sulfur carrier)-H + biotin + 2 5'-deoxyadenosine + 2 L-methionine + 2 oxidized [2Fe-2S]-[ferredoxin]. It functions in the pathway cofactor biosynthesis; biotin biosynthesis; biotin from 7,8-diaminononanoate: step 2/2. In terms of biological role, catalyzes the conversion of dethiobiotin (DTB) to biotin by the insertion of a sulfur atom into dethiobiotin via a radical-based mechanism. The sequence is that of Biotin synthase from Mycolicibacterium gilvum (strain PYR-GCK) (Mycobacterium gilvum (strain PYR-GCK)).